The primary structure comprises 204 residues: Proteasome subunit beta type-2-A (204 aa).

Met-1 bears the N-acetylmethionine mark.

This sequence belongs to the peptidase T1B family. In terms of assembly, component of the 20S core complex of the 26S proteasome. The 26S proteasome is composed of a core protease (CP), known as the 20S proteasome, capped at one or both ends by the 19S regulatory particle (RP/PA700). The 20S proteasome core is composed of 28 subunits that are arranged in four stacked rings, resulting in a barrel-shaped structure. The two end rings are each formed by seven alpha subunits, and the two central rings are each formed by seven beta subunits. The catalytic chamber with the active sites is on the inside of the barrel.

The protein resides in the cytoplasm. It localises to the nucleus. Functionally, non-catalytic component of the proteasome, a multicatalytic proteinase complex which is characterized by its ability to cleave peptides with Arg, Phe, Tyr, Leu, and Glu adjacent to the leaving group at neutral or slightly basic pH. The proteasome has an ATP-dependent proteolytic activity. The chain is Proteasome subunit beta type-2-A (PBD1) from Arabidopsis thaliana (Mouse-ear cress).